Reading from the N-terminus, the 291-residue chain is Tryptophan 2,3-dioxygenase (291 aa).

Substrate contacts are provided by residues 51–55 (FIIQH), Y113, and R117. H240 lines the heme pocket. T254 contributes to the substrate binding site.

It belongs to the tryptophan 2,3-dioxygenase family. Homotetramer. Heme is required as a cofactor.

It catalyses the reaction L-tryptophan + O2 = N-formyl-L-kynurenine. Its pathway is amino-acid degradation; L-tryptophan degradation via kynurenine pathway; L-kynurenine from L-tryptophan: step 1/2. Functionally, heme-dependent dioxygenase that catalyzes the oxidative cleavage of the L-tryptophan (L-Trp) pyrrole ring and converts L-tryptophan to N-formyl-L-kynurenine. Catalyzes the oxidative cleavage of the indole moiety. In Myxococcus xanthus (strain DK1622), this protein is Tryptophan 2,3-dioxygenase.